Here is a 429-residue protein sequence, read N- to C-terminus: 3-phosphoshikimate 1-carboxyvinyltransferase (429 aa).

3-phosphoshikimate contacts are provided by Lys22, Ser23, and Arg27. Lys22 is a binding site for phosphoenolpyruvate. Positions 94 and 122 each coordinate phosphoenolpyruvate. 4 residues coordinate 3-phosphoshikimate: Ser167, Gln169, Asp315, and Lys342. Position 169 (Gln169) interacts with phosphoenolpyruvate. The Proton acceptor role is filled by Asp315. The phosphoenolpyruvate site is built by Arg346 and Arg388.

This sequence belongs to the EPSP synthase family. In terms of assembly, monomer.

The protein resides in the cytoplasm. It carries out the reaction 3-phosphoshikimate + phosphoenolpyruvate = 5-O-(1-carboxyvinyl)-3-phosphoshikimate + phosphate. Its pathway is metabolic intermediate biosynthesis; chorismate biosynthesis; chorismate from D-erythrose 4-phosphate and phosphoenolpyruvate: step 6/7. Its function is as follows. Catalyzes the transfer of the enolpyruvyl moiety of phosphoenolpyruvate (PEP) to the 5-hydroxyl of shikimate-3-phosphate (S3P) to produce enolpyruvyl shikimate-3-phosphate and inorganic phosphate. This Citrifermentans bemidjiense (strain ATCC BAA-1014 / DSM 16622 / JCM 12645 / Bem) (Geobacter bemidjiensis) protein is 3-phosphoshikimate 1-carboxyvinyltransferase.